We begin with the raw amino-acid sequence, 302 residues long: uncharacterized protein (302 aa).

Helical transmembrane passes span 10–30, 65–85, 102–122, 130–150, 162–182, 190–210, 224–244, 251–271, and 282–302; these read VLSVLVLVLLGYILKVLGVLG, LVLIPVICMITGTLSGTIAYL, VAAAMMNSGFLGYPVTAGIFG, IFYDTGTTLMFTSLGLLLSHI, AVFFPPLWAFLLGVIFNLWGL, ILGYLSGAAVPLIMISLGLTL, LVSGLRLLISPLMAAGISYVL, FSVTVLEASMPSAMLAAVLAI, and SCIFMSTILSLVSLPLWSVVL.

The protein belongs to the auxin efflux carrier (TC 2.A.69) family.

The protein localises to the cell membrane. This is an uncharacterized protein from Methanothermobacter thermautotrophicus (strain ATCC 29096 / DSM 1053 / JCM 10044 / NBRC 100330 / Delta H) (Methanobacterium thermoautotrophicum).